A 150-amino-acid chain; its full sequence is MEEPSEKVDPMKDPETPQKKDEEDALDDTDVLQPETLVKVMKKLTLNPGVKRSARRRSLRNRIAAVPVENKSEKIRREVQSAFPKRRVRTLLSVLKDPIAKMRRLVRIEQRQKRLEGNEFERDSEPFRCLCTFCHYQRWDPSENAKIGKN.

Basic and acidic residues predominate over residues 1–22 (MEEPSEKVDPMKDPETPQKKDE). Residues 1-32 (MEEPSEKVDPMKDPETPQKKDEEDALDDTDVL) form a disordered region. Positions 1-75 (MEEPSEKVDP…VPVENKSEKI (75 aa)) are required for H3K9me2-binding. Positions 76-150 (RREVQSAFPK…PSENAKIGKN (75 aa)) are required to exclude TET3 from the maternal pronucleus.

Expressed in the immature oocytes and in newborn ovaries. Subsequently detected in maturing oocytes and in preimplantation embryos. Expressed in pluripotent embryonic but not in differentiated somatic cells. Expressed in blastocysts, epiblasts, primordial germ cells, embryonic gonads and primitive spermatogonia. No expression is detected in adult testes.

It localises to the nucleus. It is found in the cytoplasm. Functionally, primordial germ cell (PGCs)-specific protein involved in epigenetic chromatin reprogramming in the zygote following fertilization. In zygotes, DNA demethylation occurs selectively in the paternal pronucleus before the first cell division, while the adjacent maternal pronucleus and certain paternally-imprinted loci are protected from this process. Participates in protection of DNA methylation in the maternal pronucleus by preventing conversion of 5mC to 5hmC: specifically recognizes and binds histone H3 dimethylated at 'Lys-9' (H3K9me2) on maternal genome, and protects maternal genome from TET3-mediated conversion to 5hmC and subsequent DNA demethylation. Does not bind paternal chromatin, which is mainly packed into protamine and does not contain much H3K9me2 mark. Also protects imprinted loci that are marked with H3K9me2 in mature sperm from DNA demethylation in early embryogenesis. May be important for the totipotent/pluripotent states continuing through preimplantation development. Also involved in chromatin condensation in oocytogenesis. The protein is Developmental pluripotency-associated protein 3 (Dppa3) of Mus musculus (Mouse).